The following is a 282-amino-acid chain: Elongation factor Ts (282 aa).

The tract at residues 80 to 83 (TDFV) is involved in Mg(2+) ion dislocation from EF-Tu.

It belongs to the EF-Ts family.

It is found in the cytoplasm. Associates with the EF-Tu.GDP complex and induces the exchange of GDP to GTP. It remains bound to the aminoacyl-tRNA.EF-Tu.GTP complex up to the GTP hydrolysis stage on the ribosome. The polypeptide is Elongation factor Ts (tsf) (Chlamydia trachomatis serovar D (strain ATCC VR-885 / DSM 19411 / UW-3/Cx)).